Here is a 25-residue protein sequence, read N- to C-terminus: LASP1 neighbor protein (25 aa).

The chain crosses the membrane as a helical span at residues isoleucine 4–leucine 24.

The protein localises to the membrane. Its function is as follows. May play a key role in the skin fibroblasts (FBs)-keratinocyte-like cells (KLCs). The sequence is that of LASP1 neighbor protein from Homo sapiens (Human).